The primary structure comprises 111 residues: Nucleoid-associated protein PputW619_3586 (111 aa).

A disordered region spans residues 87–111; sequence EQSSQEKMGGMTAGMQLPPGFKMPF.

The protein belongs to the YbaB/EbfC family. Homodimer.

It is found in the cytoplasm. It localises to the nucleoid. Functionally, binds to DNA and alters its conformation. May be involved in regulation of gene expression, nucleoid organization and DNA protection. The sequence is that of Nucleoid-associated protein PputW619_3586 from Pseudomonas putida (strain W619).